Consider the following 308-residue polypeptide: tRNA uridine(34) hydroxylase (308 aa).

Residues 129 to 223 enclose the Rhodanese domain; the sequence is QEKDTLILDA…YGKHPETQGA (95 aa). Cysteine 183 acts as the Cysteine persulfide intermediate in catalysis.

Belongs to the TrhO family.

It catalyses the reaction uridine(34) in tRNA + AH2 + O2 = 5-hydroxyuridine(34) in tRNA + A + H2O. Functionally, catalyzes oxygen-dependent 5-hydroxyuridine (ho5U) modification at position 34 in tRNAs. The polypeptide is tRNA uridine(34) hydroxylase (Onion yellows phytoplasma (strain OY-M)).